We begin with the raw amino-acid sequence, 162 residues long: Nucleotide-binding protein Franean1_6074 (162 aa).

It belongs to the YajQ family.

Nucleotide-binding protein. This Parafrankia sp. (strain EAN1pec) protein is Nucleotide-binding protein Franean1_6074.